Here is a 236-residue protein sequence, read N- to C-terminus: MNLLGFLAVVALSTASVQAGTIDHNQVVPFAQPEATTISQKAAIKFKPQIHITNGCHPYPAVNEAGETSGGLKTSGAPSSSCKGSGWGSQVYGRSTWYNGKWAIMYSWYFPKDSPSTGLGHRHDWEHVVVWIDNPDVANPTILAASPSAHSGYSFYAPPSSDSVGGTSVKVNYESNWPINHALDMTSKSGETQDLIMWDQLTDEARAGLNSADFGDTFAPFTDDNFKTALGKAWPF.

An N-terminal signal peptide occupies residues 1 to 19 (MNLLGFLAVVALSTASVQA). The short motif at 103 to 113 (AIMYSWYFPKD) is the Conserved undecapeptide motif I element. The Hepta-peptide GHRHDWE motif II motif lies at 120-126 (GHRHDWE).

The protein belongs to the Necrosis inducing protein (NPP1) family.

The protein localises to the secreted. Its function is as follows. Secreted effector that contributes to virulence during infection by P.capsici. Induces distinct chlorosis at 3 days after inoculation of host C.annuum leaves, and all the chlorotic areas gradually turn brown and become moderately necrotic at 7 days after inoculation. Leads only to chlorotic areas, without necrosis at 7 days after non-host N.benthamiana leaves infection. Induces cell death in hot pepper. The polypeptide is NLP effector protein 3 (Phytophthora capsici).